A 124-amino-acid chain; its full sequence is Max-like protein 1 (124 aa).

A compositionally biased stretch (acidic residues) spans 1–10 (MSDMSDLEDD). The interval 1–44 (MSDMSDLEDDQTGHCGSGEHSGPFDPKRHAREQHNALERRRRDN) is disordered. Positions 29-42 (HAREQHNALERRRR) are basic motif. The bHLH domain occupies 29–82 (HAREQHNALERRRRDNIKDMYTSLREVVPDANGERVQASRAVILKKAIESIEKG). Positions 32–44 (EQHNALERRRRDN) are enriched in basic and acidic residues. The interval 43–82 (DNIKDMYTSLREVVPDANGERVQASRAVILKKAIESIEKG) is helix-loop-helix motif. The stretch at 86–113 (SATLSVDVAEQESKNAKLREEIARLKAK) forms a coiled coil.

This sequence belongs to the MAX family. As to quaternary structure, heterodimer with mdl-1 in presence and absence of DNA. Interacts with tdpt-1; the interaction promotes axon regeneration after injury. In terms of tissue distribution, expressed in D-type motor neurons.

The protein resides in the nucleus. Functionally, transcriptional regulator which binds to the E box motif 5'-CACGTG-3', when in a heterodimeric complex with mdl-1. Involved in the control of lifespan in response to dietary restriction, the decline in protein homeostasis associated with normal aging and may overlap with the insulin-like signaling pathway. Involved in promoting infection by the microsporidian pathogen N.parisii. Required for the expression of svh-2 and the promotion of axon regeneration after injury. The protein is Max-like protein 1 of Caenorhabditis elegans.